We begin with the raw amino-acid sequence, 254 residues long: Pyridoxine 5'-phosphate synthase (254 aa).

Asparagine 8 provides a ligand contact to 3-amino-2-oxopropyl phosphate. 10-11 (DH) lines the 1-deoxy-D-xylulose 5-phosphate pocket. Arginine 19 lines the 3-amino-2-oxopropyl phosphate pocket. The Proton acceptor role is filled by histidine 44. Residues arginine 46 and histidine 51 each coordinate 1-deoxy-D-xylulose 5-phosphate. Glutamate 74 serves as the catalytic Proton acceptor. Residue threonine 104 participates in 1-deoxy-D-xylulose 5-phosphate binding. Histidine 198 (proton donor) is an active-site residue. Residues glycine 199 and 220-221 (GH) contribute to the 3-amino-2-oxopropyl phosphate site.

Belongs to the PNP synthase family. Homooctamer; tetramer of dimers.

The protein resides in the cytoplasm. It carries out the reaction 3-amino-2-oxopropyl phosphate + 1-deoxy-D-xylulose 5-phosphate = pyridoxine 5'-phosphate + phosphate + 2 H2O + H(+). Its pathway is cofactor biosynthesis; pyridoxine 5'-phosphate biosynthesis; pyridoxine 5'-phosphate from D-erythrose 4-phosphate: step 5/5. Its function is as follows. Catalyzes the complicated ring closure reaction between the two acyclic compounds 1-deoxy-D-xylulose-5-phosphate (DXP) and 3-amino-2-oxopropyl phosphate (1-amino-acetone-3-phosphate or AAP) to form pyridoxine 5'-phosphate (PNP) and inorganic phosphate. The chain is Pyridoxine 5'-phosphate synthase from Caulobacter vibrioides (strain ATCC 19089 / CIP 103742 / CB 15) (Caulobacter crescentus).